Consider the following 1864-residue polypeptide: RNA1 polyprotein (1864 aa).

The SF3 helicase domain maps to Leu-457 to Ala-622. Gly-483–Ser-490 is an ATP binding site. A helical membrane pass occupies residues Ala-892–Ala-912. Ser-916 carries the O-(5'-phospho-RNA)-serine modification. The Peptidase C3 domain occupies Gln-943–Pro-1146. Residues His-983, Glu-1019, and Cys-1109 each act as for picornain 3C-like protease activity in the active site. The 131-residue stretch at Asn-1426–Phe-1556 folds into the RdRp catalytic domain.

In terms of processing, specific enzymatic cleavages by picornain 3C-like protease in vivo yield mature proteins. Picornain 3C-like protease is autocatalytically processed. Post-translationally, uridylylated by the polymerase and is covalently linked to the 5'-end of genomic RNA. This uridylylated form acts as a nucleotide-peptide primer for the polymerase.

Its subcellular location is the host membrane. It is found in the host cytoplasm. The protein localises to the host perinuclear region. It localises to the host endoplasmic reticulum. The enzyme catalyses RNA(n) + a ribonucleoside 5'-triphosphate = RNA(n+1) + diphosphate. Functionally, thiol protease that cleaves the RNA1 and RNA2 polyproteins. Plays a role in RNA replication. It is covalently linked to the 5'terminus of both viral single-stranded RNA1 and RNA2 molecules. In terms of biological role, down-regulates the RNA1 polyprotein processing and enhances trans-cleavage of RNA2 polyproteins. The protease cofactor and the putative helicase seem to target the replication complexes to ER membranes. Their physical association causes the membrane rearrangement of host ER that may result in formation of the small membranous vesicles that are the site of viral RNA synthesis. Its function is as follows. The protease cofactor and the putative helicase seem to target the replication complexes to ER membranes. Their physical association causes the membrane rearrangement of host ER that may result in formation of the small membranous vesicles that are the site of viral RNA synthesis. Functionally, replicates the viral genome. The chain is RNA1 polyprotein from Trifolium pratense (Red clover).